A 263-amino-acid polypeptide reads, in one-letter code: CRISPR-associated protein Cas5 2 (263 aa).

It belongs to the CRISPR-associated protein Cas5 family. Subtype I-A/Apern subfamily. As to quaternary structure, part of the aCascade ribonucleoprotein complex, minimally composed of Csa2 and Cas5a, which binds crRNA. Other possible components of aCascade in strain P1 are Cas6b (SSO1437) and Csa5 (SSO1443), while SSO1399, Cas5b (SSO1400) and SSO1401 have sometimes been seen weakly associated. Csa2 is probably the major RNA-binding subunit. The Csa2-Cas5a-crRNA complex also binds target DNA homologous to crRNA, probably forming an R-loop. Purified aCascade forms a filament about 6 nm in width.

Its function is as follows. CRISPR (clustered regularly interspaced short palindromic repeat) is an adaptive immune system that provides protection against mobile genetic elements (viruses, transposable elements and conjugative plasmids). CRISPR clusters contain spacers, sequences complementary to antecedent mobile elements, and target invading nucleic acids. CRISPR clusters are transcribed and processed into CRISPR RNA (crRNA). This chain is CRISPR-associated protein Cas5 2 (cas5b), found in Saccharolobus solfataricus (strain ATCC 35092 / DSM 1617 / JCM 11322 / P2) (Sulfolobus solfataricus).